Here is a 65-residue protein sequence, read N- to C-terminus: Photosystem II reaction center protein J (65 aa).

The chain crosses the membrane as a helical span at residues L35 to Y55.

Belongs to the PsbJ family. PSII is composed of 1 copy each of membrane proteins PsbA, PsbB, PsbC, PsbD, PsbE, PsbF, PsbH, PsbI, PsbJ, PsbK, PsbL, PsbM, PsbT, PsbX, PsbY, Psb30/Ycf12, peripheral proteins PsbO, CyanoQ (PsbQ), PsbU, PsbV and a large number of cofactors. It forms dimeric complexes.

The protein localises to the cellular thylakoid membrane. Its function is as follows. One of the components of the core complex of photosystem II (PSII). PSII is a light-driven water:plastoquinone oxidoreductase that uses light energy to abstract electrons from H(2)O, generating O(2) and a proton gradient subsequently used for ATP formation. It consists of a core antenna complex that captures photons, and an electron transfer chain that converts photonic excitation into a charge separation. The chain is Photosystem II reaction center protein J from Prochlorococcus marinus (strain MIT 9312).